We begin with the raw amino-acid sequence, 134 residues long: Holo-[acyl-carrier-protein] synthase (134 aa).

Residues Asp-8 and Glu-59 each contribute to the Mg(2+) site.

The protein belongs to the P-Pant transferase superfamily. AcpS family. It depends on Mg(2+) as a cofactor.

It localises to the cytoplasm. The enzyme catalyses apo-[ACP] + CoA = holo-[ACP] + adenosine 3',5'-bisphosphate + H(+). In terms of biological role, transfers the 4'-phosphopantetheine moiety from coenzyme A to a Ser of acyl-carrier-protein. This chain is Holo-[acyl-carrier-protein] synthase, found in Zymomonas mobilis subsp. mobilis (strain ATCC 31821 / ZM4 / CP4).